Reading from the N-terminus, the 212-residue chain is Ribonuclease HII (212 aa).

Positions 28 to 212 (SIIAGVDEVG…KSFAPIRQVV (185 aa)) constitute an RNase H type-2 domain. Residues aspartate 34, glutamate 35, and aspartate 127 each contribute to the a divalent metal cation site.

It belongs to the RNase HII family. Mn(2+) is required as a cofactor. The cofactor is Mg(2+).

Its subcellular location is the cytoplasm. The enzyme catalyses Endonucleolytic cleavage to 5'-phosphomonoester.. In terms of biological role, endonuclease that specifically degrades the RNA of RNA-DNA hybrids. The polypeptide is Ribonuclease HII (Chlamydia caviae (strain ATCC VR-813 / DSM 19441 / 03DC25 / GPIC) (Chlamydophila caviae)).